Consider the following 510-residue polypeptide: GTPase Der (510 aa).

2 EngA-type G domains span residues 4 to 168 and 222 to 395; these read PVVA…AEKM and IKIA…ACAT. Residues 10–17, 57–61, 120–123, 228–235, 275–279, and 340–343 contribute to the GTP site; these read GRPNVGKS, DTGGI, NKTD, DTAGV, and NKWD. A KH-like domain is found at 396-480; the sequence is QKMTTSMLTR…PIRLLFQEGN (85 aa).

Belongs to the TRAFAC class TrmE-Era-EngA-EngB-Septin-like GTPase superfamily. EngA (Der) GTPase family. Associates with the 50S ribosomal subunit.

Its function is as follows. GTPase that plays an essential role in the late steps of ribosome biogenesis. The sequence is that of GTPase Der from Pasteurella multocida (strain Pm70).